We begin with the raw amino-acid sequence, 360 residues long: Phospho-N-acetylmuramoyl-pentapeptide-transferase (360 aa).

10 helical membrane passes run 25-45 (RGIL…PWMI), 73-93 (TMGG…WADL), 97-117 (YVWV…VDDY), 135-155 (FWQS…APSA), 170-190 (IPLG…SSNA), 199-219 (GLAI…CYLS), 236-256 (AGEL…FLWF), 263-283 (VFMG…MAVI), 288-308 (IVLF…VIQV), and 338-358 (VIVR…ATLK).

This sequence belongs to the glycosyltransferase 4 family. MraY subfamily. Requires Mg(2+) as cofactor.

It is found in the cell inner membrane. It catalyses the reaction UDP-N-acetyl-alpha-D-muramoyl-L-alanyl-gamma-D-glutamyl-meso-2,6-diaminopimeloyl-D-alanyl-D-alanine + di-trans,octa-cis-undecaprenyl phosphate = di-trans,octa-cis-undecaprenyl diphospho-N-acetyl-alpha-D-muramoyl-L-alanyl-D-glutamyl-meso-2,6-diaminopimeloyl-D-alanyl-D-alanine + UMP. It participates in cell wall biogenesis; peptidoglycan biosynthesis. In terms of biological role, catalyzes the initial step of the lipid cycle reactions in the biosynthesis of the cell wall peptidoglycan: transfers peptidoglycan precursor phospho-MurNAc-pentapeptide from UDP-MurNAc-pentapeptide onto the lipid carrier undecaprenyl phosphate, yielding undecaprenyl-pyrophosphoryl-MurNAc-pentapeptide, known as lipid I. This chain is Phospho-N-acetylmuramoyl-pentapeptide-transferase, found in Pseudomonas savastanoi pv. phaseolicola (strain 1448A / Race 6) (Pseudomonas syringae pv. phaseolicola (strain 1448A / Race 6)).